Consider the following 768-residue polypeptide: Photosystem I P700 chlorophyll a apoprotein A1 (768 aa).

8 helical membrane passes run 76 to 99 (VFSAHFGHLAVIFIWMSAAFFHGA), 162 to 185 (LMALAIGALLMAAIMLHGGIYHYH), 201 to 225 (LNHHIAGLVGLGSIAWAGHCIHIGA), 310 to 328 (ISHHHLAFGVLAVLGGHLY), 369 to 392 (WHAQLGLNLAMIGSLSIIISHHMY), 408 to 434 (LGLFTHHMWIGGLFIVGAAAHAGIAMI), 456 to 478 (ALISHLNWACMFLGFHSFGLYIH), and 559 to 577 (FMIHHIHAFTIHVTLLILL). [4Fe-4S] cluster is bound by residues cysteine 601 and cysteine 610. Transmembrane regions (helical) follow at residues 617–638 (HVFLGLFWMYNGLSVVIFHFSW) and 682–704 (ISMYGLMFLGAHFVWAFSLMFLF). Histidine 693 contributes to the divinylchlorophyll a' binding site. 2 residues coordinate divinyl chlorophyll a: methionine 701 and tyrosine 709. Tryptophan 710 is a phylloquinone binding site. The chain crosses the membrane as a helical span at residues 742–762 (AVGAAHFLLGGIATTWAFFHA).

Belongs to the PsaA/PsaB family. The PsaA/B heterodimer binds the P700 divinyl chlorophyll special pair and subsequent electron acceptors. PSI consists of a core antenna complex that captures photons, and an electron transfer chain that converts photonic excitation into a charge separation. The cyanobacterial PSI reaction center is composed of one copy each of PsaA,B,C,D,E,F,I,J,K,L,M and X, and forms trimeric complexes. The cofactor is PSI electron transfer chain: 5 divinyl chlorophyll a, 1 divinyl chlorophyll a', 2 phylloquinones and 3 4Fe-4S clusters. PSI core antenna: 90 divinyl chlorophyll a, 22 carotenoids, 3 phospholipids and 1 galactolipid. P700 is a divinyl chlorophyll a/divinyl chlorophyll a' dimer, A0 is one or more divinyl chlorophyll a, A1 is one or both phylloquinones and FX is a shared 4Fe-4S iron-sulfur center..

It is found in the cellular thylakoid membrane. It carries out the reaction reduced [plastocyanin] + hnu + oxidized [2Fe-2S]-[ferredoxin] = oxidized [plastocyanin] + reduced [2Fe-2S]-[ferredoxin]. In terms of biological role, psaA and PsaB bind P700, the primary electron donor of photosystem I (PSI), as well as the electron acceptors A0, A1 and FX. PSI is a plastocyanin/cytochrome c6-ferredoxin oxidoreductase, converting photonic excitation into a charge separation, which transfers an electron from the donor P700 chlorophyll pair to the spectroscopically characterized acceptors A0, A1, FX, FA and FB in turn. Oxidized P700 is reduced on the lumenal side of the thylakoid membrane by plastocyanin or cytochrome c6. The protein is Photosystem I P700 chlorophyll a apoprotein A1 of Prochlorococcus marinus (strain NATL2A).